The sequence spans 188 residues: RWD domain-containing protein 4 (188 aa).

The RWD domain maps to 9–111; the sequence is MELEALRSIY…EYAKDNKEQF (103 aa). The segment at 132 to 167 is disordered; that stretch reads TPSAAPSSKKKDKKEQLSKAQKRKLADKTDHKGELP. Residues 155-166 are compositionally biased toward basic and acidic residues; that stretch reads KLADKTDHKGEL.

The sequence is that of RWD domain-containing protein 4 (Rwdd4) from Rattus norvegicus (Rat).